The chain runs to 456 residues: High mobility group B protein 6 (456 aa).

Disordered stretches follow at residues 1–42 (MATN…KSAK), 117–142 (SSLT…KRPS), 238–258 (AEQD…PKHP), and 349–389 (MLKK…YFLF). Over residues 11 to 21 (KKPRNSRKALK) the composition is skewed to basic residues. A DNA-binding region (HMG box 1) is located at residues 138–206 (TKRPSSSYVL…AYLQVIAKEK (69 aa)). Residues 240–254 (QDNKKKNKKEKDPLK) show a composition bias toward basic and acidic residues. Residues 255–321 (PKHPVSAFLV…TYLQAMEEYK (67 aa)) constitute a DNA-binding region (HMG box 2). Residues 354–363 (EKTDNLIKKE) show a composition bias toward basic and acidic residues. Positions 379–447 (PKKPASSYFL…AYKKEVEAYN (69 aa)) form a DNA-binding region, HMG box 3.

The protein localises to the nucleus. The sequence is that of High mobility group B protein 6 (HMGB6) from Arabidopsis thaliana (Mouse-ear cress).